A 396-amino-acid polypeptide reads, in one-letter code: 8-amino-7-oxononanoate synthase (396 aa).

Arginine 21 lines the substrate pocket. Residue glycine 112–tyrosine 113 coordinates pyridoxal 5'-phosphate. Histidine 137 contributes to the substrate binding site. Positions 183, 211, and 239 each coordinate pyridoxal 5'-phosphate. At lysine 242 the chain carries N6-(pyridoxal phosphate)lysine. Threonine 358 contacts substrate.

It belongs to the class-II pyridoxal-phosphate-dependent aminotransferase family. BioF subfamily. As to quaternary structure, homodimer. The cofactor is pyridoxal 5'-phosphate.

It carries out the reaction 6-carboxyhexanoyl-[ACP] + L-alanine + H(+) = (8S)-8-amino-7-oxononanoate + holo-[ACP] + CO2. The protein operates within cofactor biosynthesis; biotin biosynthesis. Functionally, catalyzes the decarboxylative condensation of pimeloyl-[acyl-carrier protein] and L-alanine to produce 8-amino-7-oxononanoate (AON), [acyl-carrier protein], and carbon dioxide. This chain is 8-amino-7-oxononanoate synthase, found in Bordetella petrii (strain ATCC BAA-461 / DSM 12804 / CCUG 43448).